We begin with the raw amino-acid sequence, 144 residues long: uncharacterized protein (144 aa).

A helical membrane pass occupies residues 25-47 (LTLLDGCCVALVLALTAWSGFFV).

Its subcellular location is the membrane. This is an uncharacterized protein from Treponema pallidum (strain Nichols).